We begin with the raw amino-acid sequence, 150 residues long: Histone H3-like centromeric protein A (150 aa).

The interval 1–56 is disordered; sequence MRPGSTPASRRKSRPPRRVSPPLPTTSTRSPGRPSAPEQRKAPRATPKKRFRPGTR. The segment covering 25–37 has biased composition (low complexity); the sequence is TTSTRSPGRPSAP. Residues 42-53 are compositionally biased toward basic residues; that stretch reads APRATPKKRFRP. The tract at residues 53–150 is H3-like; the sequence is PGTRALMEIR…RIRGVTEGLG (98 aa).

It belongs to the histone H3 family. Component of centromeric nucleosomes, where DNA is wrapped around a histone octamer core. The octamer contains two molecules each of H2A, H2B, CENPA and H4 assembled in one CENPA-H4 heterotetramer and two H2A-H2B heterodimers. CENPA modulates the DNA-binding characteristics of nucleosomes so that protruding DNA ends have higher flexibility than in nucleosomes containing conventional histone H3.

The protein resides in the nucleus. It is found in the chromosome. It localises to the centromere. Its function is as follows. Histone H3-like nucleosomal protein that is specifically found in centromeric nucleosomes. Replaces conventional H3 in the nucleosome core of centromeric chromatin that serves as an assembly site for the inner kinetochore. The presence of CENPA subtly modifies the nucleosome structure and the way DNA is wrapped around the nucleosome and gives rise to protruding DNA ends that are less well-ordered and rigid compared to nucleosomes containing histone H3. May serve as an epigenetic mark that propagates centromere identity through replication and cell division. Required for recruitment and assembly of kinetochore proteins, and as a consequence required for progress through mitosis, chromosome segregation and cytokinesis. In Xenopus tropicalis (Western clawed frog), this protein is Histone H3-like centromeric protein A (cenpa).